A 661-amino-acid polypeptide reads, in one-letter code: DNA cross-link repair protein PSO2/SNM1 (661 aa).

Positions 1-44 are disordered; the sequence is MSRKSIVQIRRSEVKRKRSSTASSTSEGKTLHKNTHTSSKRQRT. The segment covering 31 to 43 has biased composition (basic residues); the sequence is LHKNTHTSSKRQR. A UBZ4-type zinc finger spans residues 144–174; that stretch reads VIQCPICLENLSHLELYERETHCDTCIGSDP. 4 residues coordinate Zn(2+): cysteine 147, cysteine 150, histidine 165, and cysteine 169.

Belongs to the DNA repair metallo-beta-lactamase (DRMBL) family.

The protein localises to the nucleus. Its function is as follows. Required for DNA interstrand cross-link repair. This requires cleavage of cross-linked DNA to generate DNA double strand breaks (DSBs). This protein has 5' exonuclease activity on single-stranded and double-stranded DNA, which appears to be necessary for the processing of DNA double strand breaks prior to ligation. The chain is DNA cross-link repair protein PSO2/SNM1 (PSO2) from Saccharomyces cerevisiae (strain ATCC 204508 / S288c) (Baker's yeast).